The sequence spans 479 residues: Ribosomal RNA small subunit methyltransferase F (479 aa).

S-adenosyl-L-methionine-binding positions include 125–131, glutamate 149, aspartate 176, and aspartate 194; that span reads AAAPGSK. Cysteine 247 (nucleophile) is an active-site residue.

It belongs to the class I-like SAM-binding methyltransferase superfamily. RsmB/NOP family.

Its subcellular location is the cytoplasm. It carries out the reaction cytidine(1407) in 16S rRNA + S-adenosyl-L-methionine = 5-methylcytidine(1407) in 16S rRNA + S-adenosyl-L-homocysteine + H(+). Its function is as follows. Specifically methylates the cytosine at position 1407 (m5C1407) of 16S rRNA. The chain is Ribosomal RNA small subunit methyltransferase F from Salmonella arizonae (strain ATCC BAA-731 / CDC346-86 / RSK2980).